The following is a 107-amino-acid chain: uncharacterized protein (107 aa).

The interval 87–107 (KNRNGPKAEKRRPYVRAHAKW) is disordered.

This is an uncharacterized protein from Saccharomyces cerevisiae (strain ATCC 204508 / S288c) (Baker's yeast).